The sequence spans 761 residues: 1,2-alpha-glucosylglycerol phosphorylase (761 aa).

Position 327–328 (327–328 (YQ)) interacts with glycerol. Position 333-334 (333-334 (WD)) interacts with substrate. Glutamate 475 serves as the catalytic Proton donor. Substrate is bound at residue 587 to 588 (KQ).

The protein belongs to the glycosyl hydrolase 65 family. As to quaternary structure, homodimer.

The catalysed reaction is 2-O-(alpha-D-glucopyranosyl)glycerol + phosphate = beta-D-glucose 1-phosphate + glycerol. In terms of biological role, catalyzes both the (1) reversible phosphorolysis of 2-O-alpha-D-glucopyranosyl-sn-glycerol (GG) from beta-D-glucose 1-phosphate (betaGlc1P) and glycerol and (2) the hydrolysis of betaGlc1P. the betaGlc1P hydrolysis is a glucosyl-transfer reaction to an acceptor water molecule that produces an anomer-inverted alpha-glucose, not a phosphatase-type reaction. In the absence of glycerol produces alpha-D-glucopyranose and phosphate from beta-D-glucopyranose 1-phosphate. This is 1,2-alpha-glucosylglycerol phosphorylase from Bacillus selenitireducens (strain ATCC 700615 / DSM 15326 / MLS10).